Consider the following 312-residue polypeptide: MIEFEKPNITVVEQEDSYGKFVVEPLERGFGTTLGNSLRRVLLTSIPGTGLVYVQIDGVLHEFSTVPGVREDVTKIILNLKKLELKSLSDEQKVIELDVEGPATVTADDLKVDADVQVLNPDQYICTIAEGGHLHMELAVKNGRGYVAASDNKSDDMPIGVIPVDSLFSPIKKVNYQVESTRVGKRDDFDKLTFEIWTDGSIKPNDALSFAAKILVEHFKVFESADANTKFSEVMVEKEDDKKEKKLEMTIEELDLSVRSYNCLKRAGINTLQELTDKTESDMMRVRNLGRKSLEEVKNKLTDLGLSLRQED.

The tract at residues 1 to 226 is alpha N-terminal domain (alpha-NTD); that stretch reads MIEFEKPNIT…EHFKVFESAD (226 aa). An alpha C-terminal domain (alpha-CTD) region spans residues 243 to 312; that stretch reads KEKKLEMTIE…DLGLSLRQED (70 aa).

It belongs to the RNA polymerase alpha chain family. In terms of assembly, homodimer. The RNAP catalytic core consists of 2 alpha, 1 beta, 1 beta' and 1 omega subunit. When a sigma factor is associated with the core the holoenzyme is formed, which can initiate transcription.

It catalyses the reaction RNA(n) + a ribonucleoside 5'-triphosphate = RNA(n+1) + diphosphate. Its function is as follows. DNA-dependent RNA polymerase catalyzes the transcription of DNA into RNA using the four ribonucleoside triphosphates as substrates. The polypeptide is DNA-directed RNA polymerase subunit alpha (Lactobacillus acidophilus (strain ATCC 700396 / NCK56 / N2 / NCFM)).